The sequence spans 293 residues: Bifunctional monothiol glutaredoxin-S16, chloroplastic (293 aa).

Residues 1-62 constitute a chloroplast transit peptide; sequence MAAITISSSL…APSRRRSFFI (62 aa). Cysteine 123 and cysteine 219 are disulfide-bonded. The Glutaredoxin domain occupies 194 to 293; that stretch reads EELIDRLVKE…ENGELANILN (100 aa). Lysine 211 contributes to the glutathione binding site. [2Fe-2S] cluster is bound at residue cysteine 219. Glutathione-binding positions include arginine 251, phenylalanine 263, and 276–277; that span reads CD.

The protein belongs to the glutaredoxin family. CGFS subfamily. In terms of assembly, [2Fe-2S]-bridged holo-homodimer. Interacts in vitro with SUFE1, BOLA1, BOLA2 and BOLA4. Interacts in vivo only with SUFE1, BOLA1 and BOLA4. Interacts with SBP1.

The protein localises to the plastid. It is found in the chloroplast. With respect to regulation, the formation of an intramolecular disulfide bond negatively regulates both the N-terminal endonuclease and the C-terminal glutaredoxin activities. In terms of biological role, may only reduce GSH-thiol disulfides, but not protein disulfides. Participates probably to the maturation of iron-sulfur proteins and to the regulation of the redox state of the BOLA proteins. The GRXS16-BOLA1 heterodimer binds a labile, oxygen sensitive iron-sulfur cluster. Able to cleave linearized DNA in vitro. This Arabidopsis thaliana (Mouse-ear cress) protein is Bifunctional monothiol glutaredoxin-S16, chloroplastic.